The following is a 196-amino-acid chain: NADH-quinone oxidoreductase subunit B (196 aa).

Cys75, Cys76, Cys140, and Cys170 together coordinate [4Fe-4S] cluster.

This sequence belongs to the complex I 20 kDa subunit family. As to quaternary structure, NDH-1 is composed of 14 different subunits. Subunits NuoB, C, D, E, F, and G constitute the peripheral sector of the complex. The cofactor is [4Fe-4S] cluster.

The protein resides in the cell inner membrane. It carries out the reaction a quinone + NADH + 5 H(+)(in) = a quinol + NAD(+) + 4 H(+)(out). NDH-1 shuttles electrons from NADH, via FMN and iron-sulfur (Fe-S) centers, to quinones in the respiratory chain. Couples the redox reaction to proton translocation (for every two electrons transferred, four hydrogen ions are translocated across the cytoplasmic membrane), and thus conserves the redox energy in a proton gradient. In Caulobacter sp. (strain K31), this protein is NADH-quinone oxidoreductase subunit B.